The primary structure comprises 471 residues: Methyltransferase OMS1, mitochondrial (471 aa).

The transit peptide at 1-39 (MIVFRRFPTCLLHHIRQPASRSLLLESQRRSLSFTSYKY) directs the protein to the mitochondrion. The Mitochondrial matrix portion of the chain corresponds to 40–103 (NSSHIDDDKS…AIARSEKFSK (64 aa)). The chain crosses the membrane as a helical span at residues 104-123 (GMTKYMIGAYVIFLIYGLFF). Residues 124-471 (TKKLFAKDKE…LEPVPPVSKS (348 aa)) are Mitochondrial intermembrane-facing. Over residues 450–463 (FEKKDDMASKKELE) the composition is skewed to basic and acidic residues. Residues 450–471 (FEKKDDMASKKELEPVPPVSKS) form a disordered region.

It belongs to the methyltransferase superfamily. METL family.

It localises to the mitochondrion inner membrane. In terms of biological role, mitochondrial methyltransferase which suppresses respiratory defects caused by OXA1 mutations when overexpressed. The protein is Methyltransferase OMS1, mitochondrial (OMS1) of Saccharomyces cerevisiae (strain ATCC 204508 / S288c) (Baker's yeast).